The sequence spans 276 residues: Pantothenate synthetase (276 aa).

27-34 contributes to the ATP binding site; the sequence is MGALHKGH. Residue His-34 is the Proton donor of the active site. Gln-58 is a binding site for (R)-pantoate. Gln-58 is a binding site for beta-alanine. 147–150 contacts ATP; that stretch reads GKKD. Gln-153 is a binding site for (R)-pantoate. ATP contacts are provided by residues Val-176 and 184–187; that span reads LSSR.

This sequence belongs to the pantothenate synthetase family. As to quaternary structure, homodimer.

Its subcellular location is the cytoplasm. The catalysed reaction is (R)-pantoate + beta-alanine + ATP = (R)-pantothenate + AMP + diphosphate + H(+). It functions in the pathway cofactor biosynthesis; (R)-pantothenate biosynthesis; (R)-pantothenate from (R)-pantoate and beta-alanine: step 1/1. In terms of biological role, catalyzes the condensation of pantoate with beta-alanine in an ATP-dependent reaction via a pantoyl-adenylate intermediate. This chain is Pantothenate synthetase, found in Helicobacter acinonychis (strain Sheeba).